Consider the following 182-residue polypeptide: Peptidoglycan-recognition protein SB2 (182 aa).

An N-terminal signal peptide occupies residues 1-17; the sequence is MKLQLALVLCGLTLALG. In terms of domain architecture, N-acetylmuramoyl-L-alanine amidase spans 40–165; it reads PVRLIIIHHT…CQTKATACPG (126 aa). Residue His-47 participates in Zn(2+) binding. An intrachain disulfide couples Cys-54 to Cys-60. An N-linked (GlcNAc...) asparagine glycan is attached at Asn-149. The Zn(2+) site is built by His-155 and Cys-163.

This sequence belongs to the N-acetylmuramoyl-L-alanine amidase 2 family. The cofactor is Zn(2+).

Its subcellular location is the secreted. The catalysed reaction is Hydrolyzes the link between N-acetylmuramoyl residues and L-amino acid residues in certain cell-wall glycopeptides.. N-acetylmuramyl-L-alanine amidase involved in innate immunity by degrading bacterial peptidoglycans (PGN). Probably plays a scavenger role by digesting biologically active PGN into biologically inactive fragments. Has no direct bacteriolytic activity. The protein is Peptidoglycan-recognition protein SB2 (PGRP-SB2) of Drosophila melanogaster (Fruit fly).